A 567-amino-acid polypeptide reads, in one-letter code: Periplasmic [NiFe] hydrogenase large subunit (567 aa).

Glu-62 contacts Mg(2+). 2 residues coordinate Ni(2+): Cys-81 and Cys-84. Cys-84 provides a ligand contact to Fe cation. Residue Leu-498 participates in Mg(2+) binding. The Ni(2+) site is built by Cys-546 and Cys-549. Cys-549 serves as a coordination point for Fe cation. Residue His-552 coordinates Mg(2+). Residues Val-553–Leu-567 constitute a propeptide that is removed on maturation.

It belongs to the [NiFe]/[NiFeSe] hydrogenase large subunit family. Heterodimer of a large and a small subunit. The cofactor is Ni(2+). Fe cation is required as a cofactor.

It localises to the periplasm. It carries out the reaction 2 Fe(III)-[cytochrome c3] + H2 = 2 Fe(II)-[cytochrome c3] + 2 H(+). Catalyzes the reversible oxidoreduction of molecular hydrogen, in conjunction with a specific electron acceptor, cytochrome c3. The sequence is that of Periplasmic [NiFe] hydrogenase large subunit (hydB) from Nitratidesulfovibrio vulgaris (strain DSM 19637 / Miyazaki F) (Desulfovibrio vulgaris).